Here is a 443-residue protein sequence, read N- to C-terminus: Chorionicgonadotropic hormone-like protein (443 aa).

A compositionally biased stretch (basic residues) spans 263-286 (RCAGRPCPRRHRRPCNASKSHRPM). Positions 263–292 (RCAGRPCPRRHRRPCNASKSHRPMRMQQRD) are disordered.

The protein to mammalian CGHB.

The protein resides in the secreted. The protein localises to the cell wall. Its function is as follows. Cell wall protein that resembles the beta subunit of human chorionic gonadotropin. Stimulates growth and change in morphology. This chain is Chorionicgonadotropic hormone-like protein (xcg), found in Stenotrophomonas maltophilia (Pseudomonas maltophilia).